The following is a 337-amino-acid chain: Glyceraldehyde-3-phosphate dehydrogenase 1, cytosolic (337 aa).

NAD(+) contacts are provided by residues 13–14, aspartate 35, and arginine 82; that span reads RI. D-glyceraldehyde 3-phosphate contacts are provided by residues 153 to 155, threonine 184, 213 to 214, and arginine 236; these read SCT and TG. Catalysis depends on cysteine 154, which acts as the Nucleophile. An NAD(+)-binding site is contributed by asparagine 318.

Belongs to the glyceraldehyde-3-phosphate dehydrogenase family. In terms of assembly, homotetramer. Phosphorylated after gibberellin treatment.

It localises to the cytoplasm. It carries out the reaction D-glyceraldehyde 3-phosphate + phosphate + NAD(+) = (2R)-3-phospho-glyceroyl phosphate + NADH + H(+). The protein operates within carbohydrate degradation; glycolysis; pyruvate from D-glyceraldehyde 3-phosphate: step 1/5. Key enzyme in glycolysis that catalyzes the first step of the pathway by converting D-glyceraldehyde 3-phosphate (G3P) into 3-phospho-D-glyceroyl phosphate. Essential for the maintenance of cellular ATP levels and carbohydrate metabolism. The protein is Glyceraldehyde-3-phosphate dehydrogenase 1, cytosolic (GAPC1) of Oryza sativa subsp. japonica (Rice).